A 400-amino-acid polypeptide reads, in one-letter code: NADH-quinone oxidoreductase subunit D (400 aa).

It belongs to the complex I 49 kDa subunit family. NDH-1 is composed of 14 different subunits. Subunits NuoB, C, D, E, F, and G constitute the peripheral sector of the complex.

The protein localises to the cell inner membrane. The enzyme catalyses a quinone + NADH + 5 H(+)(in) = a quinol + NAD(+) + 4 H(+)(out). Its function is as follows. NDH-1 shuttles electrons from NADH, via FMN and iron-sulfur (Fe-S) centers, to quinones in the respiratory chain. The immediate electron acceptor for the enzyme in this species is believed to be menaquinone. Couples the redox reaction to proton translocation (for every two electrons transferred, four hydrogen ions are translocated across the cytoplasmic membrane), and thus conserves the redox energy in a proton gradient. The protein is NADH-quinone oxidoreductase subunit D of Prosthecochloris aestuarii (strain DSM 271 / SK 413).